The following is an 83-amino-acid chain: Large ribosomal subunit protein eL37 (83 aa).

Residues Cys19, Cys22, Cys34, and Cys37 each contribute to the Zn(2+) site. The C4-type zinc finger occupies 19-37 (CRRCGRNSYHVQWERCAAC).

This sequence belongs to the eukaryotic ribosomal protein eL37 family. Zn(2+) is required as a cofactor.

Functionally, binds to the 23S rRNA. This Leishmania donovani protein is Large ribosomal subunit protein eL37 (RPL37).